Here is a 306-residue protein sequence, read N- to C-terminus: tRNA pseudouridine synthase B (306 aa).

Residue Asp43 is the Nucleophile of the active site.

It belongs to the pseudouridine synthase TruB family. Type 1 subfamily.

It catalyses the reaction uridine(55) in tRNA = pseudouridine(55) in tRNA. Responsible for synthesis of pseudouridine from uracil-55 in the psi GC loop of transfer RNAs. The polypeptide is tRNA pseudouridine synthase B (Heliobacterium modesticaldum (strain ATCC 51547 / Ice1)).